A 331-amino-acid polypeptide reads, in one-letter code: L-lactate dehydrogenase A chain (331 aa).

NAD(+) is bound by residues 29–57 and Arg98; that span reads GMVGMASAISILLKDLCDELAMVDVMEDK. 3 residues coordinate substrate: Arg105, Asn137, and Arg168. Asn137 lines the NAD(+) pocket. His192 serves as the catalytic Proton acceptor. Position 247 (Thr247) interacts with substrate.

This sequence belongs to the LDH/MDH superfamily. LDH family. Homotetramer.

It is found in the cytoplasm. The catalysed reaction is (S)-lactate + NAD(+) = pyruvate + NADH + H(+). The protein operates within fermentation; pyruvate fermentation to lactate; (S)-lactate from pyruvate: step 1/1. Its function is as follows. Interconverts simultaneously and stereospecifically pyruvate and lactate with concomitant interconversion of NADH and NAD(+). The chain is L-lactate dehydrogenase A chain (ldha) from Dissostichus eleginoides (Patagonian toothfish).